The chain runs to 369 residues: WAT1-related protein At3g53210 (369 aa).

Transmembrane regions (helical) follow at residues 12-31 (IAMV…MRYA), 39-59 (LVFP…SAYF), 72-92 (FLIQ…GFYI), 103-123 (ASAT…LLGI), 133-153 (GIAK…ITLY), 182-202 (WTLG…WIVL), 214-234 (FSFV…ISAY), 252-272 (ALLY…IYVV), 278-298 (LFVS…ATLA), and 303-323 (FYLG…LVVM). EamA domains lie at 24–150 (NHVI…SLVI) and 194–323 (LCWS…LVVM). A disordered region spans residues 348-369 (GDEEDYHNNKPRSPISQPLISS).

It belongs to the drug/metabolite transporter (DMT) superfamily. Plant drug/metabolite exporter (P-DME) (TC 2.A.7.4) family.

The protein resides in the membrane. This is WAT1-related protein At3g53210 from Arabidopsis thaliana (Mouse-ear cress).